Here is a 298-residue protein sequence, read N- to C-terminus: D-alanine--D-alanine ligase (298 aa).

Positions 97-290 (FYSLFKNYIQ…FDELINIIIK (194 aa)) constitute an ATP-grasp domain. 124-173 (PFIIKPRKSGSSKGVYIIHNENEYKFYLEKDLKEFQEVLVQEYIKGREIT) serves as a coordination point for ATP. Mg(2+) contacts are provided by Asp-245, Glu-257, and Asn-259.

The protein belongs to the D-alanine--D-alanine ligase family. Requires Mg(2+) as cofactor. Mn(2+) is required as a cofactor.

It is found in the cytoplasm. It catalyses the reaction 2 D-alanine + ATP = D-alanyl-D-alanine + ADP + phosphate + H(+). The protein operates within cell wall biogenesis; peptidoglycan biosynthesis. Cell wall formation. The chain is D-alanine--D-alanine ligase from Petrotoga mobilis (strain DSM 10674 / SJ95).